We begin with the raw amino-acid sequence, 52 residues long: ATP synthase protein 8 (52 aa).

A helical transmembrane segment spans residues 7 to 23 (MMWFSLFIMFSMTMMLF).

It belongs to the ATPase protein 8 family. As to quaternary structure, F-type ATPases have 2 components, CF(1) - the catalytic core - and CF(0) - the membrane proton channel.

The protein localises to the mitochondrion membrane. Its function is as follows. Mitochondrial membrane ATP synthase (F(1)F(0) ATP synthase or Complex V) produces ATP from ADP in the presence of a proton gradient across the membrane which is generated by electron transport complexes of the respiratory chain. F-type ATPases consist of two structural domains, F(1) - containing the extramembraneous catalytic core and F(0) - containing the membrane proton channel, linked together by a central stalk and a peripheral stalk. During catalysis, ATP synthesis in the catalytic domain of F(1) is coupled via a rotary mechanism of the central stalk subunits to proton translocation. Part of the complex F(0) domain. Minor subunit located with subunit a in the membrane. The sequence is that of ATP synthase protein 8 (MT-ATP8) from Locusta migratoria (Migratory locust).